We begin with the raw amino-acid sequence, 83 residues long: RNA-binding protein Hfq (83 aa).

The Sm domain occupies 10 to 70 (DAFLNQLRKE…ISTVSPSRPV (61 aa)).

It belongs to the Hfq family. Homohexamer.

Its function is as follows. RNA chaperone that binds small regulatory RNA (sRNAs) and mRNAs to facilitate mRNA translational regulation in response to envelope stress, environmental stress and changes in metabolite concentrations. Also binds with high specificity to tRNAs. In Desulforudis audaxviator (strain MP104C), this protein is RNA-binding protein Hfq.